Consider the following 1368-residue polypeptide: DNA-directed RNA polymerase subunit beta (1368 aa).

It belongs to the RNA polymerase beta chain family. In terms of assembly, the RNAP catalytic core consists of 2 alpha, 1 beta, 1 beta' and 1 omega subunit. When a sigma factor is associated with the core the holoenzyme is formed, which can initiate transcription.

The enzyme catalyses RNA(n) + a ribonucleoside 5'-triphosphate = RNA(n+1) + diphosphate. DNA-dependent RNA polymerase catalyzes the transcription of DNA into RNA using the four ribonucleoside triphosphates as substrates. In Cupriavidus pinatubonensis (strain JMP 134 / LMG 1197) (Cupriavidus necator (strain JMP 134)), this protein is DNA-directed RNA polymerase subunit beta.